The primary structure comprises 628 residues: NUAK family SNF1-like kinase 2 (628 aa).

Position 1 is an N-acetylmethionine (methionine 1). Residues 53-303 form the Protein kinase domain; the sequence is YEFLETLGKG…LEDVASHWWV (251 aa). Residues 59-67 and lysine 81 each bind ATP; that span reads LGKGTYGKV. Catalysis depends on aspartate 175, which acts as the Proton acceptor. A Phosphothreonine; by LKB1 modification is found at threonine 208. The interval 355–493 is disordered; the sequence is KQHAPGGGST…KEQKPPQASG (139 aa). Serine 435 bears the Phosphoserine mark. A compositionally biased stretch (low complexity) spans 457–469; the sequence is SGYYSSPEPSESG. A phosphoserine mark is found at serine 523, serine 544, serine 547, and serine 573. Positions 531 to 562 are disordered; the sequence is RPLARASRPSGAVSEDSILSSESFDQLDLPER.

It belongs to the protein kinase superfamily. CAMK Ser/Thr protein kinase family. SNF1 subfamily. It depends on Mg(2+) as a cofactor. Post-translationally, phosphorylated at Thr-208 by STK11/LKB1 in complex with STE20-related adapter-alpha (STRADA) pseudo kinase and CAB39. Autophosphorylation is also possible at Thr-208.

The enzyme catalyses L-seryl-[protein] + ATP = O-phospho-L-seryl-[protein] + ADP + H(+). The catalysed reaction is L-threonyl-[protein] + ATP = O-phospho-L-threonyl-[protein] + ADP + H(+). Its activity is regulated as follows. Activated by phosphorylation on Thr-208. In terms of biological role, stress-activated kinase involved in tolerance to glucose starvation. Induces cell-cell detachment by increasing F-actin conversion to G-actin. Expression is induced by CD95 or TNF-alpha, via NF-kappa-B. Protects cells from CD95-mediated apoptosis and is required for the increased motility and invasiveness of CD95-activated tumor cells. Phosphorylates LATS1 and LATS2. Plays a key role in neural tube closure during embryonic development through LATS2 phosphorylation and regulation of the nuclear localization of YAP1 a critical downstream regulatory target in the Hippo signaling pathway. In Homo sapiens (Human), this protein is NUAK family SNF1-like kinase 2.